The chain runs to 2251 residues: U3 small nucleolar RNA-associated protein 10 (2251 aa).

The HEAT repeat unit spans residues 945–983; that stretch reads VVPLLLTALADAEAAIRLAAIACLAHILAICKYAGDLAK. 2 helical membrane-spanning segments follow: residues 962–982 and 1460–1480; these read LAAI…GDLA and LLVD…LLVD.

Belongs to the HEATR1/UTP10 family. Component of the ribosomal small subunit (SSU) processome.

The protein localises to the nucleus. It is found in the nucleolus. Its subcellular location is the membrane. Functionally, involved in nucleolar processing of pre-18S ribosomal RNA. Involved in ribosome biosynthesis. This Mycosarcoma maydis (Corn smut fungus) protein is U3 small nucleolar RNA-associated protein 10.